A 410-amino-acid polypeptide reads, in one-letter code: Peptidase T-like protein YPO1009/y3403/YP_3421 (410 aa).

H82 contacts Zn(2+). The active site involves D84. D144 is a Zn(2+) binding site. Catalysis depends on E176, which acts as the Proton acceptor. The Zn(2+) site is built by E177, D200, and H382.

Belongs to the peptidase M20B family. Zn(2+) is required as a cofactor.

This chain is Peptidase T-like protein YPO1009/y3403/YP_3421, found in Yersinia pestis.